A 338-amino-acid polypeptide reads, in one-letter code: Glutaminase (338 aa).

Substrate-binding residues include Ser-80, Asn-130, Glu-174, Asn-181, Tyr-205, Tyr-257, and Val-275.

This sequence belongs to the glutaminase family. As to quaternary structure, homotetramer.

It carries out the reaction L-glutamine + H2O = L-glutamate + NH4(+). In Microcystis aeruginosa (strain NIES-843 / IAM M-2473), this protein is Glutaminase.